Consider the following 611-residue polypeptide: DNA mismatch repair protein MutL (611 aa).

Belongs to the DNA mismatch repair MutL/HexB family.

In terms of biological role, this protein is involved in the repair of mismatches in DNA. It is required for dam-dependent methyl-directed DNA mismatch repair. May act as a 'molecular matchmaker', a protein that promotes the formation of a stable complex between two or more DNA-binding proteins in an ATP-dependent manner without itself being part of a final effector complex. In Bartonella bacilliformis (strain ATCC 35685 / KC583 / Herrer 020/F12,63), this protein is DNA mismatch repair protein MutL.